Consider the following 310-residue polypeptide: 26S proteasome non-ATPase regulatory subunit 7 homolog B (310 aa).

An N-acetylmethionine modification is found at M1. Positions 17-154 (VIVHPLVLLS…YYAVEEVKEN (138 aa)) constitute an MPN domain.

The protein belongs to the peptidase M67A family. As to quaternary structure, component of the 19S regulatory particle (RP/PA700) lid subcomplex of the 26S proteasome. The 26S proteasome is composed of a core protease (CP), known as the 20S proteasome, capped at one or both ends by the 19S regulatory particle (RP/PA700). The RP/PA700 complex is composed of at least 17 different subunits in two subcomplexes, the base and the lid, which form the portions proximal and distal to the 20S proteolytic core, respectively.

Its function is as follows. Acts as a regulatory subunit of the 26S proteasome which is involved in the ATP-dependent degradation of ubiquitinated proteins. This Arabidopsis thaliana (Mouse-ear cress) protein is 26S proteasome non-ATPase regulatory subunit 7 homolog B (RPN8B).